The chain runs to 65 residues: Small ribosomal subunit protein bS21 (65 aa).

The protein belongs to the bacterial ribosomal protein bS21 family.

The sequence is that of Small ribosomal subunit protein bS21 from Cytophaga hutchinsonii (strain ATCC 33406 / DSM 1761 / CIP 103989 / NBRC 15051 / NCIMB 9469 / D465).